The chain runs to 454 residues: MPEFLEDPSVLTKDKLKSELVANNVTLPAGEQRKDVYVQLYLQHLTARNRPPLPAGTNSKGPPDFSSDEEREPTPVLGSGAAAAGRSRAAVGRKATKKTDKPRQEDKDDLDVTELTNEDLLDQLVKYGVNPGPIVGTTRKLYEKKLLKLREQGTESRSSTPLPTISSSAENTRQNGSNDSDRYSDNEEDSKIELKLEKREPLKGRAKTPVTLKQRRVEHNQSYSQAGITETEWTSGSSKGGPLQALTRESTRGSRRTPRKRVETSEHFRIDGPVISESTPIAETIMASSNESLVVNRVTGNFKHASPILPITEFSDIPRRAPKKPLTRAEVGEKTEERRVERDILKEMFPYEASTPTGISASCRRPIKGAAGRPLELSDFRMEESFSSKYVPKYVPLADVKSEKTKKGRSIPVWIKILLFVVVAVFLFLVYQAMETNQVNPFSNFLHVDPRKSN.

The tract at residues 1-410 (MPEFLEDPSV…KSEKTKKGRS (410 aa)) is nucleoplasmic. The region spanning 5-48 (LEDPSVLTKDKLKSELVANNVTLPAGEQRKDVYVQLYLQHLTAR) is the LEM-like domain. 2 disordered regions span residues 47–117 (ARNR…ELTN) and 149–265 (LREQ…VETS). The interval 49–108 (NRPPLPAGTNSKGPPDFSSDEEREPTPVLGSGAAAAGRSRAAVGRKATKKTDKPRQEDKD) is linker. Position 57 is a phosphothreonine (Thr-57). Ser-59, Ser-66, and Ser-67 each carry phosphoserine. Position 74 is a phosphothreonine (Thr-74). Residues 78-93 (GSGAAAAGRSRAAVGR) show a composition bias toward low complexity. The residue at position 79 (Ser-79) is a Phosphoserine. Arg-86 and Arg-88 each carry omega-N-methylarginine. Residues 97-106 (KKTDKPRQED) are compositionally biased toward basic and acidic residues. Residues 107–117 (KDDLDVTELTN) show a composition bias toward acidic residues. The 45-residue stretch at 109–153 (DLDVTELTNEDLLDQLVKYGVNPGPIVGTTRKLYEKKLLKLREQG) folds into the LEM domain. The segment at 138-243 (TRKLYEKKLL…TSGSSKGGPL (106 aa)) is NAKAP95-binding N. Thr-154 bears the Phosphothreonine mark. Polar residues predominate over residues 155–178 (ESRSSTPLPTISSSAENTRQNGSN). 2 positions are modified to phosphoserine: Ser-156 and Ser-159. 2 positions are modified to phosphothreonine: Thr-160 and Thr-164. A phosphoserine mark is found at Ser-166, Ser-168, Ser-177, Ser-180, Ser-184, and Ser-190. The span at 179 to 203 (DSDRYSDNEEDSKIELKLEKREPLK) shows a compositional bias: basic and acidic residues. Lys-207 is modified (N6-acetyllysine). Thr-211 bears the Phosphothreonine mark. The span at 220 to 237 (NQSYSQAGITETEWTSGS) shows a compositional bias: polar residues. Ser-222, Ser-224, Ser-250, Ser-254, Ser-265, Ser-292, and Ser-306 each carry phosphoserine. A binds lamins B region spans residues 299–371 (TGNFKHASPI…SCRRPIKGAA (73 aa)). Residues 300–374 (GNFKHASPIL…RPIKGAAGRP (75 aa)) form an NAKAP95-binding C region. Thr-312 carries the post-translational modification Phosphothreonine. Ser-315 is modified (phosphoserine). Arg-320 is modified (citrulline). Residues Ser-362, Ser-378, and Ser-385 each carry the phosphoserine modification. Lys-389 is subject to N6-acetyllysine. Residue Lys-401 forms a Glycyl lysine isopeptide (Lys-Gly) (interchain with G-Cter in SUMO2) linkage. Position 402 is a phosphoserine (Ser-402). Residues 411-434 (IPVWIKILLFVVVAVFLFLVYQAM) form a helical; Signal-anchor for type II membrane protein membrane-spanning segment. The Lumenal portion of the chain corresponds to 435-454 (ETNQVNPFSNFLHVDPRKSN).

It belongs to the LEM family. Interacts with LMNB1, LMNB2, BANF1, AKAP8L, GMCL and chromosomes. Isoform Zeta interacts with BANF1/BAF and may sequester it in the cytoplasm. In terms of processing, mitosis-specific phosphorylation specifically abolishes its binding to lamin B and chromosomes. Post-translationally, citrullinated by PADI4. As to expression, expressed in many tissues. Most abundant in adult thymus and fetal liver.

It is found in the nucleus inner membrane. The protein resides in the cytoplasm. May help direct the assembly of the nuclear lamina and thereby help maintain the structural organization of the nuclear envelope. Possible receptor for attachment of lamin filaments to the inner nuclear membrane. May be involved in the control of initiation of DNA replication through its interaction with NAKAP95. Its function is as follows. Thymopoietin (TP) and Thymopentin (TP5) may play a role in T-cell development and function. TP5 is an immunomodulating pentapeptide. The sequence is that of Lamina-associated polypeptide 2, isoforms beta/gamma (TMPO) from Homo sapiens (Human).